Here is a 113-residue protein sequence, read N- to C-terminus: Large ribosomal subunit protein uL22 (113 aa).

It belongs to the universal ribosomal protein uL22 family. In terms of assembly, part of the 50S ribosomal subunit.

Functionally, this protein binds specifically to 23S rRNA; its binding is stimulated by other ribosomal proteins, e.g. L4, L17, and L20. It is important during the early stages of 50S assembly. It makes multiple contacts with different domains of the 23S rRNA in the assembled 50S subunit and ribosome. In terms of biological role, the globular domain of the protein is located near the polypeptide exit tunnel on the outside of the subunit, while an extended beta-hairpin is found that lines the wall of the exit tunnel in the center of the 70S ribosome. The protein is Large ribosomal subunit protein uL22 of Pelotomaculum thermopropionicum (strain DSM 13744 / JCM 10971 / SI).